The primary structure comprises 191 residues: Repressor Rok (191 aa).

Residues 2 to 43 (FNEREALRLRLEQLNEAEVKVIREYQIERDKIYAKLRELDRN) adopt a coiled-coil conformation. Residues 75–96 (SYQPQSQQQSVQPQLQSISSLP) show a composition bias toward low complexity. Residues 75-116 (SYQPQSQQQSVQPQLQSISSLPAGIPDGTTRRRRGTARPGSK) are disordered. The tract at residues 95–191 (LPAGIPDGTT…EIESAESANE (97 aa)) is DNA-binding.

The protein localises to the cytoplasm. The protein resides in the nucleoid. Repressor of comK, the master regulator of competence development. Overexpression seems to be lethal. Represses at least 20 genes that specify membrane-localized and secreted proteins, including some that encode products with antibiotic activity. Binds to many AT-rich sites in the chromosome, many of which are known or thought to derive from horizontal gene transfer; helps keep mobile element ICEBs1 quiescent in the genome. Binds to its own promoter and is thus probably autoregulatory. The chain is Repressor Rok from Bacillus subtilis (strain 168).